The sequence spans 770 residues: Formate acetyltransferase (770 aa).

Positions 5-635 (NEMQKLAWAG…KTGNTPDGRR (631 aa)) constitute a PFL domain. Cysteine 419 serves as the catalytic S-acetylcysteine intermediate. The active-site Cysteine radical intermediate is cysteine 420. Residues 642–770 (PGANPMHGRD…VITRTFTESM (129 aa)) enclose the Glycine radical domain. Glycine radical is present on glycine 745.

Belongs to the glycyl radical enzyme (GRE) family. PFL subfamily. In terms of assembly, homodimer.

The protein resides in the cytoplasm. It catalyses the reaction formate + acetyl-CoA = pyruvate + CoA. It functions in the pathway fermentation; pyruvate fermentation; formate from pyruvate: step 1/1. Its function is as follows. Catalyzes the conversion of pyruvate to formate and acetyl-CoA. This Haemophilus influenzae (strain ATCC 51907 / DSM 11121 / KW20 / Rd) protein is Formate acetyltransferase (pflB).